The following is a 90-amino-acid chain: UPF0298 protein BLi01717/BL02989 (90 aa).

The protein belongs to the UPF0298 family.

It is found in the cytoplasm. This is UPF0298 protein BLi01717/BL02989 from Bacillus licheniformis (strain ATCC 14580 / DSM 13 / JCM 2505 / CCUG 7422 / NBRC 12200 / NCIMB 9375 / NCTC 10341 / NRRL NRS-1264 / Gibson 46).